Consider the following 279-residue polypeptide: Energy-coupling factor transporter ATP-binding protein EcfA1 (279 aa).

The region spanning 5 to 240 is the ABC transporter domain; sequence IELNNIQFNY…GEALVEMGLD (236 aa). 40 to 47 contacts ATP; the sequence is GHNGSGKS.

This sequence belongs to the ABC transporter superfamily. Energy-coupling factor EcfA family. As to quaternary structure, forms a stable energy-coupling factor (ECF) transporter complex composed of 2 membrane-embedded substrate-binding proteins (S component), 2 ATP-binding proteins (A component) and 2 transmembrane proteins (T component).

The protein localises to the cell membrane. Functionally, ATP-binding (A) component of a common energy-coupling factor (ECF) ABC-transporter complex. Unlike classic ABC transporters this ECF transporter provides the energy necessary to transport a number of different substrates. This is Energy-coupling factor transporter ATP-binding protein EcfA1 from Enterococcus faecalis (strain ATCC 700802 / V583).